The chain runs to 164 residues: Choriogonadotropin subunit beta (164 aa).

Positions 1–20 (MEMLQGLLLCLLLSTGGAWA) are cleaved as a signal peptide. 6 disulfide bridges follow: Cys-29-Cys-77, Cys-43-Cys-92, Cys-46-Cys-130, Cys-54-Cys-108, Cys-58-Cys-110, and Cys-113-Cys-120. Asn-50 carries an N-linked (GlcNAc...) asparagine glycan. A disordered region spans residues 135–164 (FQDSSSKDPPRNLTSPSQLLEPADPPLVPQ). Ser-140 is a glycosylation site (O-linked (GalNAc...) serine). The N-linked (GlcNAc...) asparagine glycan is linked to Asn-146. Ser-151 carries O-linked (GalNAc...) serine glycosylation.

Belongs to the glycoprotein hormones subunit beta family. In terms of assembly, heterodimer of a common alpha chain and a unique beta chain which confers biological specificity to thyrotropin, lutropin, follitropin and gonadotropin. As to expression, placenta.

Its subcellular location is the secreted. Its function is as follows. Stimulates the ovaries to synthesize the steroids that are essential for the maintenance of pregnancy. This is Choriogonadotropin subunit beta (CGB) from Callithrix jacchus (White-tufted-ear marmoset).